The primary structure comprises 299 residues: MTDNSRLRIAMQKSGRLSDDSRELLARCGIKINLHTQRLIAMAENMPIDILRVRDDDIPGLVMDGVVDLGIIGENVLEEELLNRRAQGEDPRYFTLRRLDFGGCRLSLATPVDEAWDGPLSLNGKRIATSYPHLLKRYLDQKGISFKSCLLNGSVEVAPRAGLADAICDLVSTGATLEANGLREVEVIYRSKACLIQRDGEMEESKQQLIDKLLTRIQGVIQARESKYIMMHAPTERLDEVIALLPGAERPTILPLAGDQQRVAMHMVSSETLFWETMEKLKALGASSILVLPIEKMME.

It belongs to the ATP phosphoribosyltransferase family. Long subfamily. In terms of assembly, equilibrium between an active dimeric form, an inactive hexameric form and higher aggregates. Interconversion between the various forms is largely reversible and is influenced by the natural substrates and inhibitors of the enzyme. Requires Mg(2+) as cofactor.

Its subcellular location is the cytoplasm. It carries out the reaction 1-(5-phospho-beta-D-ribosyl)-ATP + diphosphate = 5-phospho-alpha-D-ribose 1-diphosphate + ATP. The protein operates within amino-acid biosynthesis; L-histidine biosynthesis; L-histidine from 5-phospho-alpha-D-ribose 1-diphosphate: step 1/9. Its activity is regulated as follows. Feedback inhibited by histidine. Its function is as follows. Catalyzes the condensation of ATP and 5-phosphoribose 1-diphosphate to form N'-(5'-phosphoribosyl)-ATP (PR-ATP). Has a crucial role in the pathway because the rate of histidine biosynthesis seems to be controlled primarily by regulation of HisG enzymatic activity. This chain is ATP phosphoribosyltransferase, found in Escherichia coli O7:K1 (strain IAI39 / ExPEC).